We begin with the raw amino-acid sequence, 347 residues long: Nicotinate-nucleotide--dimethylbenzimidazole phosphoribosyltransferase (347 aa).

Residue glutamate 316 is the Proton acceptor of the active site.

It belongs to the CobT family.

The enzyme catalyses 5,6-dimethylbenzimidazole + nicotinate beta-D-ribonucleotide = alpha-ribazole 5'-phosphate + nicotinate + H(+). It participates in nucleoside biosynthesis; alpha-ribazole biosynthesis; alpha-ribazole from 5,6-dimethylbenzimidazole: step 1/2. Functionally, catalyzes the synthesis of alpha-ribazole-5'-phosphate from nicotinate mononucleotide (NAMN) and 5,6-dimethylbenzimidazole (DMB). The protein is Nicotinate-nucleotide--dimethylbenzimidazole phosphoribosyltransferase of Vibrio parahaemolyticus serotype O3:K6 (strain RIMD 2210633).